The following is a 423-amino-acid chain: 3-phosphoshikimate 1-carboxyvinyltransferase (423 aa).

Positions 21, 22, and 26 each coordinate 3-phosphoshikimate. A phosphoenolpyruvate-binding site is contributed by lysine 21. Residues glycine 92 and arginine 120 each contribute to the phosphoenolpyruvate site. The 3-phosphoshikimate site is built by serine 164, glutamine 166, aspartate 312, and lysine 339. Glutamine 166 lines the phosphoenolpyruvate pocket. Aspartate 312 acts as the Proton acceptor in catalysis. The phosphoenolpyruvate site is built by arginine 343 and arginine 385.

It belongs to the EPSP synthase family. In terms of assembly, monomer.

It is found in the cytoplasm. It catalyses the reaction 3-phosphoshikimate + phosphoenolpyruvate = 5-O-(1-carboxyvinyl)-3-phosphoshikimate + phosphate. It participates in metabolic intermediate biosynthesis; chorismate biosynthesis; chorismate from D-erythrose 4-phosphate and phosphoenolpyruvate: step 6/7. Functionally, catalyzes the transfer of the enolpyruvyl moiety of phosphoenolpyruvate (PEP) to the 5-hydroxyl of shikimate-3-phosphate (S3P) to produce enolpyruvyl shikimate-3-phosphate and inorganic phosphate. This chain is 3-phosphoshikimate 1-carboxyvinyltransferase, found in Thermoanaerobacter pseudethanolicus (strain ATCC 33223 / 39E) (Clostridium thermohydrosulfuricum).